Here is a 1068-residue protein sequence, read N- to C-terminus: MPRNNDIKKVLVIGSGPIVIGQAAEFDYAGTQACRSLKEEGIEVCLVNSNPATIMTDKQIADQVYIEPLTLESLKEIIIKEKPDSILPTLGGQAGLNLGMELAECGFLDEQGVKLIGTTAETIFKAEDRQAFKDTMEKIGEPIAASQVVKNIEDGIAFTNKIGYPVVLRPAFTLGGSGGGIAHDEQELIDILSNGLRLSRVGEVLVERCIAGWKEIEYEVMRDANGNCITVCNMENIDPVGVHTGDSIVVAPSQTLGDKEYQMLRTSALNIINELQITGGCNVQYALNPDSFEYCVIEVNPRVSRSSALASKATGYPIAKVTAKIALGYHLDEIKNAITQKTYASFEPMLDYCVVKIPRLPFDKFLTAKRTLTTQMKATGEVMSICNNFEGALMKAIRSLEQHVDSLMSYDFTGLTDDELEKQLAVVDDRRIWVIAEALRRGVKYEHIHEITKIDLWFIDKIAILVEMENRLKTEELTVDLLKEAKRIEFPDNVISQLTDIDEADIKKMRYDNGIVAAYKMVDTCAAEFEAETPYYYSVFGSENEAAETNPQKKVLVLGSGPIRIGQGVEFDYCSVHCTWSFAKEGWETIIVNNNPETVSTDFDIADKLYFEPLTAEDVESIVNIEKPDGAVVQFGGQTAIKLTEALMKMGVKILGTKAEDVDAAEDRELFDEILQKTGIPRAAGGTVFTAEEAKKVANEIGYPVLVRPSYVLGGQGMKIAWNDDEIEEFIGIINTITQDHPILVDKYLMGKEIEVDAICDGTDILIPGIMEHIERTGVHSGDSISVYPAHTISEKAKETLVEYTKRLAQALHVVGMINIQFIDMDDNIYVIEVNPRSSRTVPYISKVTGIPIVDLAARIIMGETIKGMGYTPGLAPTADYIAIKMPVFSFEKLRGAEISLGPEMKSTGECLGIDKTFNGALYKAFEGAGVELPKYKQMIMTVKDADKPEAVGVAKRFEKLGYKIYATRSTAKYLQEHGVNALRVNKISQESPNVMDLILGHKIDLVIDTPTQGNGDKTRDGFLIRRNAIETGVYCITAMDTANALAHALETASDKKTPVDIATVKNL.

Residues 1–401 (MPRNNDIKKV…ALMKAIRSLE (401 aa)) are carboxyphosphate synthetic domain. ATP is bound by residues Arg-129, Arg-169, Gly-175, Gly-176, Arg-208, Ile-210, Glu-215, Gly-241, Val-242, His-243, Gln-284, and Glu-298. Positions 133 to 327 (KDTMEKIGEP…IAKVTAKIAL (195 aa)) constitute an ATP-grasp 1 domain. Mg(2+)-binding residues include Gln-284, Glu-298, and Asn-300. Positions 284, 298, and 300 each coordinate Mn(2+). The segment at 402–546 (QHVDSLMSYD…YSVFGSENEA (145 aa)) is oligomerization domain. Residues 547 to 930 (AETNPQKKVL…ALYKAFEGAG (384 aa)) form a carbamoyl phosphate synthetic domain region. The ATP-grasp 2 domain maps to 672-862 (DEILQKTGIP…IVDLAARIIM (191 aa)). 10 residues coordinate ATP: Arg-708, Lys-747, Leu-749, Glu-753, Gly-778, Val-779, His-780, Ser-781, Gln-821, and Glu-833. Positions 821, 833, and 835 each coordinate Mg(2+). 3 residues coordinate Mn(2+): Gln-821, Glu-833, and Asn-835. The region spanning 931 to 1068 (VELPKYKQMI…PVDIATVKNL (138 aa)) is the MGS-like domain. The segment at 931-1068 (VELPKYKQMI…PVDIATVKNL (138 aa)) is allosteric domain.

This sequence belongs to the CarB family. In terms of assembly, composed of two chains; the small (or glutamine) chain promotes the hydrolysis of glutamine to ammonia, which is used by the large (or ammonia) chain to synthesize carbamoyl phosphate. Tetramer of heterodimers (alpha,beta)4. It depends on Mg(2+) as a cofactor. Mn(2+) is required as a cofactor.

It carries out the reaction hydrogencarbonate + L-glutamine + 2 ATP + H2O = carbamoyl phosphate + L-glutamate + 2 ADP + phosphate + 2 H(+). The enzyme catalyses hydrogencarbonate + NH4(+) + 2 ATP = carbamoyl phosphate + 2 ADP + phosphate + 2 H(+). It participates in amino-acid biosynthesis; L-arginine biosynthesis; carbamoyl phosphate from bicarbonate: step 1/1. It functions in the pathway pyrimidine metabolism; UMP biosynthesis via de novo pathway; (S)-dihydroorotate from bicarbonate: step 1/3. Large subunit of the glutamine-dependent carbamoyl phosphate synthetase (CPSase). CPSase catalyzes the formation of carbamoyl phosphate from the ammonia moiety of glutamine, carbonate, and phosphate donated by ATP, constituting the first step of 2 biosynthetic pathways, one leading to arginine and/or urea and the other to pyrimidine nucleotides. The large subunit (synthetase) binds the substrates ammonia (free or transferred from glutamine from the small subunit), hydrogencarbonate and ATP and carries out an ATP-coupled ligase reaction, activating hydrogencarbonate by forming carboxy phosphate which reacts with ammonia to form carbamoyl phosphate. The sequence is that of Carbamoyl phosphate synthase large chain from Agathobacter rectalis (strain ATCC 33656 / DSM 3377 / JCM 17463 / KCTC 5835 / VPI 0990) (Eubacterium rectale).